Consider the following 483-residue polypeptide: Putative (R)-citramalate synthase CimA (483 aa).

The 245-residue stretch at 1 to 245 folds into the Pyruvate carboxyltransferase domain; that stretch reads MRDGEQTPGV…DTGIKHEQIY (245 aa).

Belongs to the alpha-IPM synthase/homocitrate synthase family. In terms of assembly, homodimer.

The catalysed reaction is pyruvate + acetyl-CoA + H2O = (3R)-citramalate + CoA + H(+). It participates in amino-acid biosynthesis; L-isoleucine biosynthesis; 2-oxobutanoate from pyruvate: step 1/3. Catalyzes the condensation of pyruvate and acetyl-coenzyme A to form (R)-citramalate. The sequence is that of Putative (R)-citramalate synthase CimA from Methanosarcina mazei (strain ATCC BAA-159 / DSM 3647 / Goe1 / Go1 / JCM 11833 / OCM 88) (Methanosarcina frisia).